We begin with the raw amino-acid sequence, 1041 residues long: Isoleucine--tRNA ligase (1041 aa).

Positions 53 to 63 match the 'HIGH' region motif; that stretch reads PFANGLPHYGH. Residues 619–623 carry the 'KMSKS' region motif; that stretch reads KMSKS. Residue K622 participates in ATP binding.

Belongs to the class-I aminoacyl-tRNA synthetase family. IleS type 2 subfamily. As to quaternary structure, monomer. Zn(2+) is required as a cofactor.

The protein localises to the cytoplasm. It carries out the reaction tRNA(Ile) + L-isoleucine + ATP = L-isoleucyl-tRNA(Ile) + AMP + diphosphate. Catalyzes the attachment of isoleucine to tRNA(Ile). As IleRS can inadvertently accommodate and process structurally similar amino acids such as valine, to avoid such errors it has two additional distinct tRNA(Ile)-dependent editing activities. One activity is designated as 'pretransfer' editing and involves the hydrolysis of activated Val-AMP. The other activity is designated 'posttransfer' editing and involves deacylation of mischarged Val-tRNA(Ile). The sequence is that of Isoleucine--tRNA ligase from Mycobacterium bovis (strain ATCC BAA-935 / AF2122/97).